The sequence spans 187 residues: Large ribosomal subunit protein uL6c (187 aa).

The protein belongs to the universal ribosomal protein uL6 family. In terms of assembly, part of the 50S ribosomal subunit.

The protein localises to the plastid. It localises to the chloroplast. Functionally, binds 23S rRNA. The chain is Large ribosomal subunit protein uL6c (rpl6) from Thalassiosira pseudonana (Marine diatom).